We begin with the raw amino-acid sequence, 387 residues long: Solute carrier family 25 protein Shawn (387 aa).

Solcar repeat units follow at residues 37–156 (IRPL…FKAR), 179–263 (IPFL…LKSS), and 269–366 (PTFS…GKSF). The next 6 helical transmembrane spans lie at 43–63 (VASACTGAMVTACFMTPLDVI), 128–148 (LWSGLSPTLISALPSTIIYFV), 179–199 (IPFLVPLLAGVSGRILAVTCV), 235–255 (LWRGLPPTILRDVPFSGIYWT), 275–295 (FAAGAISGSVAATITTPFDVV), and 337–357 (AIFSGLGPRLFKVAPACAIMI).

Belongs to the mitochondrial carrier (TC 2.A.29) family.

The protein resides in the mitochondrion inner membrane. Its function is as follows. Mitochondrial transporter required for glutathione import into mitochondria. This chain is Solute carrier family 25 protein Shawn, found in Drosophila melanogaster (Fruit fly).